A 505-amino-acid chain; its full sequence is Probable ribonuclease FAU-1 (505 aa).

Residues 389 to 408 (ISGHGSGTYDELGTPRESGD) are disordered.

It belongs to the FAU-1 family.

In terms of biological role, probable RNase involved in rRNA stability through maturation and/or degradation of precursor rRNAs. Binds to RNA in loop regions with AU-rich sequences. The chain is Probable ribonuclease FAU-1 from Haloquadratum walsbyi (strain DSM 16790 / HBSQ001).